We begin with the raw amino-acid sequence, 182 residues long: Large ribosomal subunit protein bL25 (182 aa).

It belongs to the bacterial ribosomal protein bL25 family. CTC subfamily. As to quaternary structure, part of the 50S ribosomal subunit; part of the 5S rRNA/L5/L18/L25 subcomplex. Contacts the 5S rRNA. Binds to the 5S rRNA independently of L5 and L18.

This is one of the proteins that binds to the 5S RNA in the ribosome where it forms part of the central protuberance. The protein is Large ribosomal subunit protein bL25 of Borrelia hermsii (strain HS1 / DAH).